Here is a 181-residue protein sequence, read N- to C-terminus: Iron sulfur cluster assembly protein 1, mitochondrial (181 aa).

The segment at 159–181 (RKTKNPTLGAEAAETPAAATATA) is disordered. Over residues 168–181 (AEAAETPAAATATA) the composition is skewed to low complexity.

The protein belongs to the NifU family. As to quaternary structure, component of the core Fe-S cluster (ISC) assembly machinery. [2Fe-2S] cluster is required as a cofactor.

It localises to the mitochondrion matrix. It participates in cofactor biosynthesis; iron-sulfur cluster biosynthesis. Functionally, scaffold protein for the de novo synthesis of iron-sulfur (Fe-S) clusters within mitochondria, which is required for maturation of both mitochondrial and cytoplasmic [2Fe-2S] and [4Fe-4S] proteins. First, a [2Fe-2S] cluster is transiently assembled on the scaffold protein ISU1. In a second step, the cluster is released from ISU1, transferred to a glutaredoxin, followed by the formation of mitochondrial [2Fe-2S] proteins, the synthesis of [4Fe-4S] clusters and their target-specific insertion into the recipient apoproteins. Cluster assembly on ISU1 depends on the function of the cysteine desulfurase complex NFS1-ISD11, which serves as the sulfur donor for cluster synthesis, the iron-binding protein frataxin as the putative iron donor, and the electron transfer chain comprised of ferredoxin reductase and ferredoxin, which receive their electrons from NADH. The polypeptide is Iron sulfur cluster assembly protein 1, mitochondrial (ISU1) (Yarrowia lipolytica (strain CLIB 122 / E 150) (Yeast)).